Consider the following 362-residue polypeptide: Ferrochelatase (362 aa).

Fe cation is bound by residues histidine 212 and glutamate 294.

Belongs to the ferrochelatase family.

It localises to the cytoplasm. It carries out the reaction heme b + 2 H(+) = protoporphyrin IX + Fe(2+). Its pathway is porphyrin-containing compound metabolism; protoheme biosynthesis; protoheme from protoporphyrin-IX: step 1/1. Functionally, catalyzes the ferrous insertion into protoporphyrin IX. The sequence is that of Ferrochelatase from Leptospira biflexa serovar Patoc (strain Patoc 1 / Ames).